A 397-amino-acid polypeptide reads, in one-letter code: Phosphoglycerate kinase (397 aa).

Residues aspartate 23–asparagine 25, arginine 38, histidine 61–lysine 64, arginine 122, and arginine 155 each bind substrate. Residues lysine 206, glycine 296, glutamate 327, and glycine 353–serine 356 contribute to the ATP site.

It belongs to the phosphoglycerate kinase family. In terms of assembly, monomer.

The protein resides in the cytoplasm. It carries out the reaction (2R)-3-phosphoglycerate + ATP = (2R)-3-phospho-glyceroyl phosphate + ADP. Its pathway is carbohydrate degradation; glycolysis; pyruvate from D-glyceraldehyde 3-phosphate: step 2/5. This is Phosphoglycerate kinase from Clostridium perfringens (strain SM101 / Type A).